A 43-amino-acid chain; its full sequence is Protein PsbN (43 aa).

The chain crosses the membrane as a helical span at residues 5 to 25; that stretch reads TLISVFVASLVIGITAYAIFV.

The protein belongs to the PsbN family.

The protein localises to the plastid. Its subcellular location is the chloroplast thylakoid membrane. May play a role in photosystem I and II biogenesis. The protein is Protein PsbN of Cyanidioschyzon merolae (strain NIES-3377 / 10D) (Unicellular red alga).